Reading from the N-terminus, the 209-residue chain is SAGA-associated factor 11 homolog 1 (209 aa).

The interval 1–36 (MSRTIVVKNPRTSGKDEDKAQIPSQDELPSGSSGAK) is disordered. An SGF11-type zinc finger spans residues 120–141 (CCCPNCERMVAAVRFAPHLQTC). Residues 156 to 166 (LTVSSRSSSTS) are compositionally biased toward low complexity. A disordered region spans residues 156–209 (LTVSSRSSSTSTGGGQANEKSTDDEDWSLDSRPGKSTKNSRNKGSKKNQKNKLK). The span at 193–209 (KNSRNKGSKKNQKNKLK) shows a compositional bias: basic residues.

The protein belongs to the SGF11 family. In terms of assembly, component of some SAGA transcription coactivator-HAT complexes, at least composed of Ada2b, not/nonstop, Pcaf/Gcn5, Sgf11 and Spt3. Within the SAGA complex, Sgf11, e(y)2, and not/nonstop form an additional subcomplex of SAGA called the DUB module (deubiquitination module). Interacts directly with not/nonstop. Interacts with the AMEX complex component xmas-2. Interacts with Cbp80; important for promoter recruitment of Sgf11 that is not associated with the DUB module.

The protein resides in the nucleus. The protein localises to the nucleoplasm. Its subcellular location is the cytoplasm. Functionally, component of the transcription regulatory histone acetylation (HAT) complex SAGA, a multiprotein complex that activates transcription by remodeling chromatin and mediating histone acetylation and deubiquitination. Within the SAGA complex, participates in a subcomplex that specifically deubiquitinates histone H2B. The SAGA complex is recruited to specific gene promoters by activators, where it is required for transcription. Required for nuclear receptor-mediated transactivation. Binds independently on SAGA to promoters in an RNA-dependent manner. Binds to mRNA and is essential for total mRNA export from the nucleus. Required to counteract heterochromatin silencing. Controls the development of neuronal connectivity in visual system by being required for accurate axon targeting in the optic lobe. Required for expression of ecdysone-induced genes such as br/broad. This chain is SAGA-associated factor 11 homolog 1, found in Drosophila willistoni (Fruit fly).